A 1495-amino-acid chain; its full sequence is VPS10 homolog 2 (1495 aa).

The N-terminal stretch at 1 to 21 (MALFRALYIIWVFLLIPLFNA) is a signal peptide. The Lumenal portion of the chain corresponds to 23-1369 (EFTPKVTRTL…AFREKYPINT (1347 aa)). BNR repeat units lie at residues 58 to 67 (ISFDAGENWK) and 101 to 111 (YVTDDQGKSWR). An N-linked (GlcNAc...) asparagine glycan is attached at Asn-148. BNR repeat units follow at residues 229–238 (LSADGGETFK), 394–403 (VSVDNGLTWS), and 465–475 (FISRDSGLTWR). N-linked (GlcNAc...) asparagine glycosylation occurs at Asn-479. 2 BNR repeats span residues 511-520 (YYSLDQGKTW) and 740-750 (YISHDGGQTIK). Asn-769 carries an N-linked (GlcNAc...) asparagine glycan. A BNR 8 repeat occupies 837 to 847 (YLTKDGGETFT). A glycan (N-linked (GlcNAc...) asparagine) is linked at Asn-986. BNR repeat units follow at residues 1119-1129 (FLTTDGGETWT) and 1161-1170 (YSTDFGKTWK). A glycan (N-linked (GlcNAc...) asparagine) is linked at Asn-1279. The helical transmembrane segment at 1370–1390 (GAYALVFVTILLVIFFAAWFV) threads the bilayer. Residues 1391–1495 (YDRGIRRNGG…GTAQLSCFKI (105 aa)) are Cytoplasmic-facing.

Belongs to the VPS10-related sortilin family.

The protein localises to the golgi apparatus. It is found in the trans-Golgi network membrane. Functions as a sorting receptor in the Golgi compartment required for the intracellular sorting and delivery of soluble vacuolar proteins, like carboxypeptidase Y (CPY) and proteinase A. The sequence is that of VPS10 homolog 2 (VTH2) from Saccharomyces cerevisiae (strain Lalvin EC1118 / Prise de mousse) (Baker's yeast).